We begin with the raw amino-acid sequence, 501 residues long: Beta-secretase 1 (501 aa).

The N-terminal stretch at 1-21 (MAPALRWLLLWVGSGMLPAQG) is a signal peptide. The propeptide occupies 22–45 (THLGIRLPLRSGLAGPPLGLRLPR). Residues 22–457 (THLGIRLPLR…PQTDESTLMT (436 aa)) lie on the Extracellular side of the membrane. One can recognise a Peptidase A1 domain in the interval 75–416 (YYVEMTVGSP…DRARKRIGFA (342 aa)). Aspartate 93 is a catalytic residue. Lysine 126 is modified (N6-acetyllysine). Residues asparagine 153, asparagine 172, and asparagine 223 are each glycosylated (N-linked (GlcNAc...) asparagine). Cystine bridges form between cysteine 216–cysteine 420, cysteine 278–cysteine 443, and cysteine 330–cysteine 380. 3 positions are modified to N6-acetyllysine: lysine 275, lysine 279, and lysine 285. Residue aspartate 289 is part of the active site. Residues lysine 299, lysine 300, and lysine 307 each carry the N6-acetyllysine modification. N-linked (GlcNAc...) asparagine glycosylation occurs at asparagine 354. A helical transmembrane segment spans residues 458–478 (IAYVMAAICALFMLPLCLMVC). 4 S-palmitoyl cysteine lipidation sites follow: cysteine 474, cysteine 478, cysteine 482, and cysteine 485. The Cytoplasmic portion of the chain corresponds to 479–501 (QWRCLRCLRHQHDDFADDISLLK). An interaction with RTN3 region spans residues 479–501 (QWRCLRCLRHQHDDFADDISLLK). The DXXLL signature appears at 496–500 (DISLL). Position 498 is a phosphoserine (serine 498). Lysine 501 is covalently cross-linked (Glycyl lysine isopeptide (Lys-Gly) (interchain with G-Cter in ubiquitin)).

Belongs to the peptidase A1 family. In terms of assembly, monomer. Interacts (via DXXLL motif) with GGA1, GGA2 and GGA3 (via their VHS domain); the interaction highly increases when BACE1 is phosphorylated at Ser-498. Interacts with RTN1; RTN2; RTN3 and RTN4; the interaction leads to inhibition of amyloid precursor protein processing. Interacts with SNX6. Interacts with PCSK9. Interacts with NAT8 and NAT8B. Interacts with BIN1. Interacts (via extracellular domain) with ADAM10 (via extracellular domain). Interacts with SORL1; this interaction may affect binding with APP and hence reduce APP cleavage. Interacts with NRDC AND NRG1. Post-translationally, palmitoylation mediates lipid raft localization. In terms of processing, acetylated in the endoplasmic reticulum at Lys-126, Lys-275, Lys-279, Lys-285, Lys-299, Lys-300 and Lys-307. Acetylation by NAT8 and NAT8B is transient and deacetylation probably occurs in the Golgi. Acetylation regulates the maturation, the transport to the plasma membrane, the stability and the expression of the protein. Ubiquitinated at Lys-501, ubiquitination leads to lysosomal degradation. Monoubiquitinated and 'Lys-63'-linked polyubitinated. Deubiquitnated by USP8; inhibits lysosomal degradation. Post-translationally, phosphorylation at Ser-498 is required for interaction with GGA1 and retrograded transport from endosomal compartments to the trans-Golgi network. Non-phosphorylated BACE1 enters a direct recycling route to the cell surface. In terms of processing, N-Glycosylated. Addition of a bisecting N-acetylglucosamine by MGAT3 blocks lysosomal targeting, further degradation and is required for maintaining stability under stress conditions.

The protein resides in the cell membrane. The protein localises to the golgi apparatus. It is found in the trans-Golgi network. Its subcellular location is the endoplasmic reticulum. It localises to the endosome. The protein resides in the cell surface. The protein localises to the cytoplasmic vesicle membrane. It is found in the membrane raft. Its subcellular location is the lysosome. It localises to the late endosome. The protein resides in the early endosome. The protein localises to the recycling endosome. It is found in the cell projection. Its subcellular location is the axon. It localises to the dendrite. The catalysed reaction is Broad endopeptidase specificity. Cleaves Glu-Val-Asn-Leu-|-Asp-Ala-Glu-Phe in the Swedish variant of Alzheimer's amyloid precursor protein.. With respect to regulation, inhibited by RTN3 and RTN4. Functionally, responsible for the proteolytic processing of the amyloid precursor protein (APP). Cleaves at the N-terminus of the A-beta peptide sequence, between residues 671 and 672 of APP, leads to the generation and extracellular release of beta-cleaved soluble APP, and a corresponding cell-associated C-terminal fragment which is later released by gamma-secretase. Cleaves CHL1. The polypeptide is Beta-secretase 1 (Bace1) (Rattus norvegicus (Rat)).